Consider the following 145-residue polypeptide: MGMMEEFKEFAVKGNVVDLAVGVIIGGAFGKIVTSFVSDIVMPPLGLIMGKVNFTDLFINLSGKPFDSLKAAKDAGAPVISYGVFINTLIDFIIIAFVIFMVIKQINRFKKEPAPAPPNTKECPHCLSAVPIKATKCAFCTSDIK.

The next 2 membrane-spanning stretches (helical) occupy residues 16 to 36 and 83 to 103; these read VVDL…VTSF and GVFI…FMVI.

The protein belongs to the MscL family. Homopentamer.

It is found in the cell inner membrane. Channel that opens in response to stretch forces in the membrane lipid bilayer. May participate in the regulation of osmotic pressure changes within the cell. In Geobacter metallireducens (strain ATCC 53774 / DSM 7210 / GS-15), this protein is Large-conductance mechanosensitive channel.